The chain runs to 320 residues: MEKNMKFPVVDLSKLNGEERDQTMALINEACENWGFFEIVNHGLPHDLMDKIEKMTKDHYKTCQEQKFNDMLKSKGLDNLETEVEDVDWESTFYVRHLPQSNLNDISDVSDEYRTAMKDFGKRLENLAEDLLDLLCENLGLEKGYLKKVFHGTKGPTFGTKVSNYPPCPKPEMIKGLRAHTDAGGIILLFQDDKVSGLQLLKDGDWIDVPPLNHSIVINLGDQLEVITNGKYKSVLHRVVTQQEGNRMSVASFYNPGSDAEISPATSLVEKDSEYPSFVFDDYMKLYAGVKFQPKEPRFAAMKNASAVTELNPTAAVETF.

Positions 111–143 (DEYRTAMKDFGKRLENLAEDLLDLLCENLGLEK) form a coiled coil. Positions 156–256 (PTFGTKVSNY…RMSVASFYNP (101 aa)) constitute a Fe2OG dioxygenase domain. The Fe cation site is built by H180, D182, and H237. R247 contacts 2-oxoglutarate.

This sequence belongs to the iron/ascorbate-dependent oxidoreductase family. The cofactor is Fe(2+). Cu(2+) is required as a cofactor. Expressed in vegetative tissues. Constitutively expressed in leaves and blades. In ethylene exposed etiolated seedlings, localized in cells at the outer side of the exaggerated hook in an ethylene-dependent manner and following an ethylene sensitive pattern. Also detected in the root tip when treated by ethylene.

It carries out the reaction 1-aminocyclopropane-1-carboxylate + L-ascorbate + O2 = ethene + L-dehydroascorbate + hydrogen cyanide + CO2 + 2 H2O. It participates in alkene biosynthesis; ethylene biosynthesis via S-adenosyl-L-methionine; ethylene from S-adenosyl-L-methionine: step 2/2. In terms of biological role, enzyme involved in the ethylene biosynthesis. Required to mediate the 1-aminocyclopropane-1-carboxylic acid (ACC)-mediated reversion of the ABA-induced inhibition of seed germination via endosperm rupture. May promote stem elongation by maximizing the extensibility cells, possibly by activating ethylene biosynthesis, in response to very-long-chain fatty acids (VLCFAs C20:0 to C30:0). The protein is 1-aminocyclopropane-1-carboxylate oxidase 2 (ACO2) of Arabidopsis thaliana (Mouse-ear cress).